The sequence spans 361 residues: NADP-dependent alcohol dehydrogenase 7 (361 aa).

Cysteine 46 contacts Zn(2+). Residues glycine 47 and histidine 51 each coordinate NADP(+). Zn(2+) is bound by residues histidine 68, cysteine 100, cysteine 103, cysteine 106, cysteine 114, and cysteine 164. Isoleucine 189, glycine 191, isoleucine 192, serine 211, arginine 212, lysine 216, cysteine 251, serine 253, serine 256, isoleucine 276, serine 300, and isoleucine 302 together coordinate NADP(+). Serine 316 carries the post-translational modification Phosphoserine. Arginine 349 is an NADP(+) binding site.

The protein belongs to the zinc-containing alcohol dehydrogenase family. In terms of assembly, homodimer. The cofactor is Zn(2+).

It carries out the reaction a primary alcohol + NADP(+) = an aldehyde + NADPH + H(+). It catalyses the reaction (E)-cinnamyl alcohol + NADP(+) = (E)-cinnamaldehyde + NADPH + H(+). The catalysed reaction is 3-methylbutanol + NADP(+) = 3-methylbutanal + NADPH + H(+). Its function is as follows. NADP-dependent alcohol dehydrogenase with a broad substrate specificity. The oxidative reactions are more than 100 times less efficient than the corresponding reductions, suggesting that the enzyme acts as an aldehyde reductase, rather than as an alcohol dehydrogenase. This chain is NADP-dependent alcohol dehydrogenase 7 (ADH7), found in Saccharomyces cerevisiae (strain ATCC 204508 / S288c) (Baker's yeast).